The sequence spans 55 residues: Large ribosomal subunit protein bL33 (55 aa).

This sequence belongs to the bacterial ribosomal protein bL33 family.

This chain is Large ribosomal subunit protein bL33, found in Dehalococcoides mccartyi (strain ATCC BAA-2266 / KCTC 15142 / 195) (Dehalococcoides ethenogenes (strain 195)).